The sequence spans 401 residues: Tyrosine--tRNA ligase (401 aa).

The short motif at 45–54 (PTAPDLHLGH) is the 'HIGH' region element. The 'KMSKS' region motif lies at 230–234 (KMSKS). Lysine 233 lines the ATP pocket. The S4 RNA-binding domain maps to 339 to 399 (IWLAKALVEC…GKRKFAKLKV (61 aa)).

The protein belongs to the class-I aminoacyl-tRNA synthetase family. TyrS type 2 subfamily. As to quaternary structure, homodimer.

It localises to the cytoplasm. The catalysed reaction is tRNA(Tyr) + L-tyrosine + ATP = L-tyrosyl-tRNA(Tyr) + AMP + diphosphate + H(+). Functionally, catalyzes the attachment of tyrosine to tRNA(Tyr) in a two-step reaction: tyrosine is first activated by ATP to form Tyr-AMP and then transferred to the acceptor end of tRNA(Tyr). This chain is Tyrosine--tRNA ligase, found in Campylobacter jejuni (strain RM1221).